Here is a 338-residue protein sequence, read N- to C-terminus: High mobility group B protein 9 (338 aa).

The 92-residue stretch at 38–129 folds into the ARID domain; that stretch reads VKDSSVFWDT…LLFHYEQVHL (92 aa). A disordered region spans residues 233–259; it reads TGRRRRRLGKRRRSRRREDPNYPKPNR. A compositionally biased stretch (basic residues) spans 235–247; the sequence is RRRRRLGKRRRSR. The HMG box DNA-binding region spans 255-322; sequence PKPNRSGYNF…RYQRELNEYR (68 aa).

As to expression, predominantly expressed in leaves, flowers and seedlings.

It is found in the nucleus. Binds preferentially DNA with A/T-rich content. Required for karyogamy during female gametophyte development, when the two polar nuclei fuse to form the diploid central cell nucleus. In Arabidopsis thaliana (Mouse-ear cress), this protein is High mobility group B protein 9 (HMGB9).